A 431-amino-acid chain; its full sequence is Peptidase B (431 aa).

Positions 196 and 201 each coordinate Mn(2+). Lys208 is a catalytic residue. Residues Asp219, Asp278, and Glu280 each coordinate Mn(2+). The active site involves Arg282.

It belongs to the peptidase M17 family. As to quaternary structure, homohexamer. Requires Mn(2+) as cofactor.

The protein resides in the cytoplasm. The enzyme catalyses Release of an N-terminal amino acid, Xaa, from a peptide or arylamide. Xaa is preferably Glu or Asp but may be other amino acids, including Leu, Met, His, Cys and Gln.. Functionally, probably plays an important role in intracellular peptide degradation. The chain is Peptidase B from Serratia proteamaculans (strain 568).